We begin with the raw amino-acid sequence, 293 residues long: MNQEQETKLVIITGMSGAGKTVAIQSFEDLGYYCVDNLPPALLPKFLDLMKDATNNIQKVALVMDLRGREFFDSLFEALDVLAKENWLEDHILFLDAKDEALVTRYKETRRSHPLATDGLPLDGIKQEREILDELRGRAQRIIDTTSLKPRNLREKILKVYKEEKQEVFSVHFVSFGFKYGLPIDADLVFDVRFLPNPHYVSNLQPLTGLNPDVSSYVFKWSDTQTFIDKVTDLLTFMLPQYKKEGKSQLVVAIGCTGGQHRSVALAEHFSKVLSNGYTTHVSHRDIDKRKVL.

14-21 (GMSGAGKT) contacts ATP. 65–68 (DLRG) is a GTP binding site.

Belongs to the RapZ-like family.

In terms of biological role, displays ATPase and GTPase activities. This is Nucleotide-binding protein OB2468 from Oceanobacillus iheyensis (strain DSM 14371 / CIP 107618 / JCM 11309 / KCTC 3954 / HTE831).